The primary structure comprises 375 residues: uncharacterized protein (375 aa).

Basic residues predominate over residues 1–12 (MAGNKKQVKKNT). Disordered regions lie at residues 1–76 (MAGN…EKKS) and 119–274 (KNKN…KEIK). Positions 26–39 (DTSNLDTAVQTSAS) are enriched in polar residues. Residues 129 to 141 (TATDGTTTTTNIP) show a composition bias toward low complexity. Basic and acidic residues predominate over residues 175–185 (DETHSHKEEPK). Low complexity-rich tracts occupy residues 198 to 212 (SKQQ…SSSS) and 225 to 241 (PTPT…KSTP). A compositionally biased stretch (basic and acidic residues) spans 256–274 (EQPKEKSSPAPVKKEKEIK). A run of 2 helical transmembrane segments spans residues 299–319 (VVYK…LVPL) and 327–347 (IYSY…TLFI). Residues 355–375 (ASKEQKSKSGNKKSTTRKVKA) form a disordered region. Over residues 363-375 (SGNKKSTTRKVKA) the composition is skewed to basic residues.

It is found in the membrane. This is an uncharacterized protein from Dictyostelium discoideum (Social amoeba).